The chain runs to 103 residues: UPF0235 protein Dole_0289 (103 aa).

This sequence belongs to the UPF0235 family.

This is UPF0235 protein Dole_0289 from Desulfosudis oleivorans (strain DSM 6200 / JCM 39069 / Hxd3) (Desulfococcus oleovorans).